Reading from the N-terminus, the 408-residue chain is Acetate kinase (408 aa).

Residue asparagine 7 coordinates Mg(2+). Residue lysine 14 participates in ATP binding. Arginine 91 is a binding site for substrate. Aspartate 148 (proton donor/acceptor) is an active-site residue. Residues 208–212 (HLGNG), 283–285 (DFR), and 331–335 (GIGEN) each bind ATP. Glutamate 384 serves as a coordination point for Mg(2+).

This sequence belongs to the acetokinase family. As to quaternary structure, homodimer. Mg(2+) serves as cofactor. It depends on Mn(2+) as a cofactor.

The protein resides in the cytoplasm. It catalyses the reaction acetate + ATP = acetyl phosphate + ADP. It participates in metabolic intermediate biosynthesis; acetyl-CoA biosynthesis; acetyl-CoA from acetate: step 1/2. Its function is as follows. Catalyzes the formation of acetyl phosphate from acetate and ATP. Can also catalyze the reverse reaction. The protein is Acetate kinase of Methanosarcina mazei (Methanosarcina frisia).